The following is a 323-amino-acid chain: Breast cancer metastasis-suppressor 1-like protein (323 aa).

Residues 1 to 17 (MPVHSRGDKKETNHHDE) are compositionally biased toward basic and acidic residues. The interval 1–56 (MPVHSRGDKKETNHHDEMEVDYAENEGSSSEDEDTESSSVSEDGDSSEMDDEDCER) is disordered. Residues 18–53 (MEVDYAENEGSSSEDEDTESSSVSEDGDSSEMDDED) are compositionally biased toward acidic residues. 2 coiled-coil regions span residues 52–84 (EDCERRRMECLDEMSNLEKQFTDLKDQLYKERL) and 149–180 (EKLLLYDTVQSELEEKIRRLEEDRHSIDITSE). Ser197 carries the phosphoserine modification. Residues Lys240 and Lys246 each participate in a glycyl lysine isopeptide (Lys-Gly) (interchain with G-Cter in SUMO2) cross-link.

The protein belongs to the BRMS1 family. Component of the Sin3/HDAC1 corepressor complex at least composed of BRMS1, BRMS1L and ING2/ING1L. Interacts with HDAC and SIN3A.

The protein localises to the nucleus. Involved in the histone deacetylase (HDAC1)-dependent transcriptional repression activity. When overexpressed in lung cancer cell line that lacks p53/TP53 expression, inhibits cell growth. This Bos taurus (Bovine) protein is Breast cancer metastasis-suppressor 1-like protein (BRMS1L).